The primary structure comprises 527 residues: Metal transporter Nramp6 (527 aa).

12 consecutive transmembrane segments (helical) span residues 38–58 (FFSY…PGNF), 71–91 (ELLW…SLAA), 115–135 (FMLW…EVIG), 143–163 (LFNI…LILL), 173–193 (LEFL…VELH), 221–241 (ISLL…ALVL), 264–284 (GLAL…SGAV), 321–341 (LFAI…TYAG), 364–384 (CLAI…GAGK), 385–405 (LIII…VPLL), 427–447 (TWII…SSFI), and 458–478 (VAIV…LAAI).

Belongs to the NRAMP (TC 2.A.55) family. Expressed in the vascular bundles of shoots, cotyledons, young leaves, sepals and petals, at the top of the flower stem and in the style. Expressed in the peduncle of developing siliques as well as in the septum and the funiculi.

The protein resides in the endomembrane system. Its function is as follows. Probable intracellular cadmium (Cd) transporter that participates in the distribution or availability of Cd within the cell. This chain is Metal transporter Nramp6 (NRAMP6), found in Arabidopsis thaliana (Mouse-ear cress).